The sequence spans 172 residues: Adenine phosphoribosyltransferase (172 aa).

Belongs to the purine/pyrimidine phosphoribosyltransferase family. As to quaternary structure, homodimer.

The protein resides in the cytoplasm. The catalysed reaction is AMP + diphosphate = 5-phospho-alpha-D-ribose 1-diphosphate + adenine. The protein operates within purine metabolism; AMP biosynthesis via salvage pathway; AMP from adenine: step 1/1. Its function is as follows. Catalyzes a salvage reaction resulting in the formation of AMP, that is energically less costly than de novo synthesis. The chain is Adenine phosphoribosyltransferase from Anaeromyxobacter dehalogenans (strain 2CP-C).